A 310-amino-acid polypeptide reads, in one-letter code: tRNA uridine(34) hydroxylase (310 aa).

The Rhodanese domain occupies 124-218 (SDPEVLLIDT…YFEEVPQEES (95 aa)). Catalysis depends on Cys178, which acts as the Cysteine persulfide intermediate.

Belongs to the TrhO family.

It catalyses the reaction uridine(34) in tRNA + AH2 + O2 = 5-hydroxyuridine(34) in tRNA + A + H2O. In terms of biological role, catalyzes oxygen-dependent 5-hydroxyuridine (ho5U) modification at position 34 in tRNAs. This Pseudomonas putida (strain ATCC 700007 / DSM 6899 / JCM 31910 / BCRC 17059 / LMG 24140 / F1) protein is tRNA uridine(34) hydroxylase.